A 498-amino-acid polypeptide reads, in one-letter code: Lysine--tRNA ligase (498 aa).

The Mg(2+) site is built by glutamate 408 and glutamate 415.

The protein belongs to the class-II aminoacyl-tRNA synthetase family. As to quaternary structure, homodimer. Requires Mg(2+) as cofactor.

Its subcellular location is the cytoplasm. The enzyme catalyses tRNA(Lys) + L-lysine + ATP = L-lysyl-tRNA(Lys) + AMP + diphosphate. The chain is Lysine--tRNA ligase from Pediococcus pentosaceus (strain ATCC 25745 / CCUG 21536 / LMG 10740 / 183-1w).